Reading from the N-terminus, the 164-residue chain is PTS system sorbose-specific EIIB component (164 aa).

Positions 1–164 (MQITLARIDD…DKINETAFCE (164 aa)) constitute a PTS EIIB type-4 domain. His-14 acts as the Pros-phosphohistidine intermediate in catalysis. His-14 is subject to Phosphohistidine; by EIIA.

Dimer of dimers.

It is found in the cytoplasm. The enzyme catalyses keto-L-sorbose(out) + N(pros)-phospho-L-histidyl-[protein] = L-sorbose 1-phosphate(in) + L-histidyl-[protein]. Functionally, the phosphoenolpyruvate-dependent sugar phosphotransferase system (PTS), a major carbohydrate active transport system, catalyzes the phosphorylation of incoming sugar substrates concomitant with their translocation across the cell membrane. The enzyme II SorABFM PTS system is involved in L-sorbose transport. The polypeptide is PTS system sorbose-specific EIIB component (Klebsiella pneumoniae).